Consider the following 291-residue polypeptide: 4-hydroxy-tetrahydrodipicolinate synthase (291 aa).

Thr45 contributes to the pyruvate binding site. Residue Tyr133 is the Proton donor/acceptor of the active site. The Schiff-base intermediate with substrate role is filled by Lys161. Ile203 is a pyruvate binding site.

The protein belongs to the DapA family. As to quaternary structure, homotetramer; dimer of dimers.

The protein localises to the cytoplasm. It carries out the reaction L-aspartate 4-semialdehyde + pyruvate = (2S,4S)-4-hydroxy-2,3,4,5-tetrahydrodipicolinate + H2O + H(+). The protein operates within amino-acid biosynthesis; L-lysine biosynthesis via DAP pathway; (S)-tetrahydrodipicolinate from L-aspartate: step 3/4. Catalyzes the condensation of (S)-aspartate-beta-semialdehyde [(S)-ASA] and pyruvate to 4-hydroxy-tetrahydrodipicolinate (HTPA). This is 4-hydroxy-tetrahydrodipicolinate synthase from Laribacter hongkongensis (strain HLHK9).